The sequence spans 515 residues: Interferon-induced, double-stranded RNA-activated protein kinase (515 aa).

Position 2 is an N-acetylalanine (Ala-2). In terms of domain architecture, DRBM 1 spans Phe-8–Asn-76. Residue Lys-68 forms a Glycyl lysine isopeptide (Lys-Gly) (interchain with G-Cter in ISG15) linkage. Position 84 is a phosphothreonine (Thr-84). The DRBM 2 domain occupies Asn-95–Lys-162. The residue at position 96 (Tyr-96) is a Phosphotyrosine; by autocatalysis. A Glycyl lysine isopeptide (Lys-Gly) (interchain with G-Cter in ISG15) cross-link involves residue Lys-154. Residue Tyr-157 is modified to Phosphotyrosine; by autocatalysis. Positions Glu-204 to Pro-224 are disordered. Position 233 is a phosphothreonine (Thr-233). The interval Asp-241–Cys-515 is interaction with TRAF5. The 263-residue stretch at Phe-242–Arg-504 folds into the Protein kinase domain. ATP is bound at residue Ile-248–Val-256. A Phosphotyrosine; by autocatalysis modification is found at Tyr-268. Lys-271 is a binding site for ATP. The active-site Proton acceptor is the Asp-376. Phosphothreonine; by autocatalysis is present on residues Thr-409 and Thr-414. Ser-419 is subject to Phosphoserine.

Belongs to the protein kinase superfamily. Ser/Thr protein kinase family. GCN2 subfamily. In terms of assembly, homodimer. Interacts with DNAJC3 and STRBP. Forms a complex with FANCA, FANCC, FANCG and HSP70. Interacts with ADAR/ADAR1. The inactive form interacts with NCK1. Interacts (via the kinase catalytic domain) with STAT3 (via SH2 domain), TRAF2 (C-terminus), TRAF5 (C-terminus) and TRAF6 (C-terminus). Interacts with MAP2K6, TARBP2, NLRP1, NLRC4 and AIM2. Interacts (via DRBM 1 domain) with DUS2L (via DRBM domain). Interacts with DHX9 (via N-terminus) and this interaction is dependent upon activation of the kinase. The inactive form interacts with GSN. Interacts with IKBKB/IKKB, NPM1, NLRP3 and IRS1. Post-translationally, autophosphorylated on several Ser, Thr and Tyr residues. Autophosphorylation of Thr-414 is dependent on Thr-409 and is stimulated by dsRNA binding and dimerization. Autophosphorylation apparently leads to the activation of the kinase. Tyrosine autophosphorylation is essential for efficient dsRNA-binding, dimerization, and kinase activation. As to expression, expressed in heart, lung, brain, kidney, testes, thymus and bone marrow.

It localises to the cytoplasm. Its subcellular location is the nucleus. The protein localises to the perinuclear region. The catalysed reaction is L-seryl-[protein] + ATP = O-phospho-L-seryl-[protein] + ADP + H(+). The enzyme catalyses L-threonyl-[protein] + ATP = O-phospho-L-threonyl-[protein] + ADP + H(+). It carries out the reaction L-tyrosyl-[protein] + ATP = O-phospho-L-tyrosyl-[protein] + ADP + H(+). With respect to regulation, initially produced in an inactive form and is activated by binding to viral dsRNA, which causes dimerization and autophosphorylation in the activation loop and stimulation of function. ISGylation can activate it in the absence of viral infection. Can also be activated by heparin, pro-inflammatory stimuli, growth factors, cytokines, oxidative stress and the cellular protein PRKRA. Activity is markedly stimulated by manganese ions. Activation is blocked by the cellular proteins TARBP2, DUS2L, NPM1, NCK1 and ADAR. In terms of biological role, IFN-induced dsRNA-dependent serine/threonine-protein kinase that phosphorylates the alpha subunit of eukaryotic translation initiation factor 2 (EIF2S1/eIF-2-alpha) and plays a key role in the innate immune response to viral infection. Inhibits viral replication via the integrated stress response (ISR): EIF2S1/eIF-2-alpha phosphorylation in response to viral infection converts EIF2S1/eIF-2-alpha in a global protein synthesis inhibitor, resulting to a shutdown of cellular and viral protein synthesis, while concomitantly initiating the preferential translation of ISR-specific mRNAs, such as the transcriptional activator ATF4. Exerts its antiviral activity on a wide range of DNA and RNA viruses including west nile virus (WNV), sindbis virus (SV), foot-and-mouth virus (FMDV), semliki Forest virus (SFV) and lymphocytic choriomeningitis virus (LCMV). Also involved in the regulation of signal transduction, apoptosis, cell proliferation and differentiation: phosphorylates other substrates including p53/TP53, PPP2R5A, DHX9, ILF3, and IRS1. In addition to serine/threonine-protein kinase activity, also has tyrosine-protein kinase activity and phosphorylates CDK1 at 'Tyr-4' upon DNA damage, facilitating its ubiquitination and proteasomal degradation. Either as an adapter protein and/or via its kinase activity, can regulate various signaling pathways (p38 MAP kinase, NF-kappa-B and insulin signaling pathways) and transcription factors (JUN, STAT1, STAT3, IRF1, ATF3) involved in the expression of genes encoding pro-inflammatory cytokines and IFNs. Activates the NF-kappa-B pathway via interaction with IKBKB and TRAF family of proteins and activates the p38 MAP kinase pathway via interaction with MAP2K6. Can act as both a positive and negative regulator of the insulin signaling pathway (ISP). Negatively regulates ISP by inducing the inhibitory phosphorylation of insulin receptor substrate 1 (IRS1) at 'Ser-312' and positively regulates ISP via phosphorylation of PPP2R5A which activates FOXO1, which in turn up-regulates the expression of insulin receptor substrate 2 (IRS2). Can regulate NLRP3 inflammasome assembly and the activation of NLRP3, NLRP1, AIM2 and NLRC4 inflammasomes. Plays a role in the regulation of the cytoskeleton by binding to gelsolin (GSN), sequestering the protein in an inactive conformation away from actin. This chain is Interferon-induced, double-stranded RNA-activated protein kinase (Eif2ak2), found in Mus musculus (Mouse).